The chain runs to 590 residues: V-type ATP synthase alpha chain (590 aa).

234-241 (GGFGAGKT) contacts ATP.

Belongs to the ATPase alpha/beta chains family.

The catalysed reaction is ATP + H2O + 4 H(+)(in) = ADP + phosphate + 5 H(+)(out). Functionally, produces ATP from ADP in the presence of a proton gradient across the membrane. The V-type alpha chain is a catalytic subunit. The chain is V-type ATP synthase alpha chain from Halothermothrix orenii (strain H 168 / OCM 544 / DSM 9562).